A 127-amino-acid chain; its full sequence is Aspartate 1-decarboxylase (127 aa).

The Schiff-base intermediate with substrate; via pyruvic acid role is filled by Ser-25. Ser-25 is subject to Pyruvic acid (Ser). Position 57 (Thr-57) interacts with substrate. Residue Tyr-58 is the Proton donor of the active site. 73–75 contacts substrate; sequence GAA.

This sequence belongs to the PanD family. Heterooctamer of four alpha and four beta subunits. Pyruvate is required as a cofactor. In terms of processing, is synthesized initially as an inactive proenzyme, which is activated by self-cleavage at a specific serine bond to produce a beta-subunit with a hydroxyl group at its C-terminus and an alpha-subunit with a pyruvoyl group at its N-terminus.

Its subcellular location is the cytoplasm. The catalysed reaction is L-aspartate + H(+) = beta-alanine + CO2. It participates in cofactor biosynthesis; (R)-pantothenate biosynthesis; beta-alanine from L-aspartate: step 1/1. Functionally, catalyzes the pyruvoyl-dependent decarboxylation of aspartate to produce beta-alanine. In Listeria monocytogenes serotype 4b (strain F2365), this protein is Aspartate 1-decarboxylase.